We begin with the raw amino-acid sequence, 153 residues long: Aspartate carbamoyltransferase regulatory chain (153 aa).

Positions 109, 114, 138, and 141 each coordinate Zn(2+).

Belongs to the PyrI family. Contains catalytic and regulatory chains. Requires Zn(2+) as cofactor.

In terms of biological role, involved in allosteric regulation of aspartate carbamoyltransferase. In Escherichia coli O7:K1 (strain IAI39 / ExPEC), this protein is Aspartate carbamoyltransferase regulatory chain.